We begin with the raw amino-acid sequence, 1233 residues long: Structural maintenance of chromosomes protein 1A (1233 aa).

Gly-32 to Ser-39 contributes to the ATP binding site. Coiled coils occupy residues Glu-104 to Leu-124 and Glu-163 to Ile-503. Residues Ile-284–Gln-293 are compositionally biased toward basic and acidic residues. Disordered stretches follow at residues Ile-284–Lys-308 and Gln-348–Glu-369. Residues Ser-358 and Ser-360 each carry the phosphoserine modification. The 115-residue stretch at Val-515–Ala-629 folds into the SMC hinge domain. 2 positions are modified to N6-acetyllysine: Lys-648 and Lys-713. Residues Asp-667–Met-935 adopt a coiled-coil conformation. Positions Met-947–Thr-969 are disordered. Residues Glu-953–Gln-967 show a composition bias toward low complexity. Ser-957, Ser-962, Ser-966, and Ser-970 each carry phosphoserine. Residues Glu-988–Asp-1068 are a coiled coil. Lys-1037 carries the post-translational modification N6-acetyllysine.

The protein belongs to the SMC family. SMC1 subfamily. In terms of assembly, forms a heterodimer with SMC3 in cohesin complexes. Cohesin complexes are composed of the SMC1 (SMC1A or SMC1B) and SMC3 heterodimer attached via their SMC hinge domain, RAD21 which link them, and one STAG protein (STAG1, STAG2 or STAG3), which interacts with RAD21. In germ cell cohesin complexes, SMC1A is mutually exclusive with SMC1B. Interacts with STAG3. Found in a complex with CDCA5, SMC3 and RAD21, PDS5A/SCC-112 and PDS5B/APRIN. Found in a complex containing POLE and SMC3. Interacts with BRCA1, SYCP2, NDC80, RPGR and BRAT1. The cohesin complex interacts with the cohesin loading complex subunits NIPBL/Scc2 (via HEAT repeats) and MAU2/Scc4. NIPBL directly contacts all members of the complex, RAD21, SMC1A/B, SMC3 and STAG1. Phosphorylated upon ionizing radiation or DNA methylation. Phosphorylation of Ser-957 and Ser-966 activates it and is required for S-phase checkpoint activation. Post-translationally, ubiquitinated by the DCX(DCAF15) complex, leading to its degradation. Ubiquitous (at protein level).

The protein localises to the nucleus. The protein resides in the chromosome. It is found in the centromere. Involved in chromosome cohesion during cell cycle and in DNA repair. Involved in DNA repair via its interaction with BRCA1 and its related phosphorylation by ATM, and works as a downstream effector in the ATM/NBS1 branch of S-phase checkpoint. Central component of cohesin complex. The cohesin complex is required for the cohesion of sister chromatids after DNA replication. The cohesin complex apparently forms a large proteinaceous ring within which sister chromatids can be trapped. At anaphase, the complex is cleaved and dissociates from chromatin, allowing sister chromatids to segregate. The cohesin complex may also play a role in spindle pole assembly during mitosis. Involved in DNA repair via its interaction with BRCA1 and its related phosphorylation by ATM, or via its phosphorylation by ATR. Works as a downstream effector both in the ATM/NBS1 branch and in the ATR/MSH2 branch of S-phase checkpoint. The polypeptide is Structural maintenance of chromosomes protein 1A (Smc1a) (Mus musculus (Mouse)).